Here is a 349-residue protein sequence, read N- to C-terminus: Aspartate-semialdehyde dehydrogenase (349 aa).

NADP(+) is bound by residues 12–15 (TGSV) and 39–40 (NS). Arginine 113 serves as a coordination point for phosphate. Cysteine 148 serves as the catalytic Acyl-thioester intermediate. Position 175 (glutamine 175) interacts with substrate. Residue 178 to 179 (SG) participates in NADP(+) binding. A substrate-binding site is contributed by glutamate 201. Lysine 204 serves as a coordination point for phosphate. Residue arginine 234 coordinates substrate. Histidine 241 acts as the Proton acceptor in catalysis. Residue 326–327 (NT) coordinates NADP(+).

The protein belongs to the aspartate-semialdehyde dehydrogenase family. In terms of assembly, homodimer.

It carries out the reaction L-aspartate 4-semialdehyde + phosphate + NADP(+) = 4-phospho-L-aspartate + NADPH + H(+). Its pathway is amino-acid biosynthesis; L-lysine biosynthesis via DAP pathway; (S)-tetrahydrodipicolinate from L-aspartate: step 2/4. The protein operates within amino-acid biosynthesis; L-methionine biosynthesis via de novo pathway; L-homoserine from L-aspartate: step 2/3. It functions in the pathway amino-acid biosynthesis; L-threonine biosynthesis; L-threonine from L-aspartate: step 2/5. In terms of biological role, catalyzes the NADPH-dependent formation of L-aspartate-semialdehyde (L-ASA) by the reductive dephosphorylation of L-aspartyl-4-phosphate. The protein is Aspartate-semialdehyde dehydrogenase of Leptospira interrogans serogroup Icterohaemorrhagiae serovar Lai (strain 56601).